A 275-amino-acid polypeptide reads, in one-letter code: Ammonia transport outward protein 3 (275 aa).

The Extracellular portion of the chain corresponds to 1–84 (MTSSASSPQD…NCAKYTPHQF (84 aa)). The residue at position 4 (Ser-4) is a Phosphoserine. The chain crosses the membrane as a helical span at residues 85–105 (ANPVPLGLASFSLSCLVLSLI). The Cytoplasmic segment spans residues 106 to 120 (NANVRGVTDGKWALS). The helical transmembrane segment at 121–141 (LFMFFGGAIELFAGLLCFVIG) threads the bilayer. The Extracellular segment spans residues 142-181 (DTYAMTVFSSFGGFWICYGYGLTDTDNLVSGYTDPTMLNN). The helical transmembrane segment at 182-202 (VIGFFLAGWTVFTFLMLMCTL) threads the bilayer. At 203 to 207 (KSTWG) the chain is on the cytoplasmic side. A helical membrane pass occupies residues 208–228 (LFLLLTFLDLTFLLLCIGTFI). Residues 229–236 (DNNNLKMA) are Extracellular-facing. The helical transmembrane segment at 237-257 (GGYFGILSSCCGWYSLYCSVV) threads the bilayer. Topologically, residues 258 to 275 (SPSNSYLAFRAHTMPNAP) are cytoplasmic.

This sequence belongs to the acetate uptake transporter (AceTr) (TC 2.A.96) family.

Its subcellular location is the cell membrane. In terms of biological role, transporter protein required for ammonia export. Induced in rho(0) cells, probably to eliminate the excess ammonia that arises because of a potential defect in ammonia assimilation in those cells. This Saccharomyces cerevisiae (strain ATCC 204508 / S288c) (Baker's yeast) protein is Ammonia transport outward protein 3 (ATO3).